The following is a 130-amino-acid chain: Small ribosomal subunit protein uS9 (130 aa).

Belongs to the universal ribosomal protein uS9 family.

The chain is Small ribosomal subunit protein uS9 from Bacillus velezensis (strain DSM 23117 / BGSC 10A6 / LMG 26770 / FZB42) (Bacillus amyloliquefaciens subsp. plantarum).